We begin with the raw amino-acid sequence, 404 residues long: Probable tRNA sulfurtransferase (404 aa).

One can recognise a THUMP domain in the interval 60-165 (QPVVEALKLV…DEAAYISYEE (106 aa)). Residues 183 to 184 (ML), 208 to 209 (HF), R265, G287, and Q296 contribute to the ATP site.

The protein belongs to the ThiI family.

The protein resides in the cytoplasm. The enzyme catalyses [ThiI sulfur-carrier protein]-S-sulfanyl-L-cysteine + a uridine in tRNA + 2 reduced [2Fe-2S]-[ferredoxin] + ATP + H(+) = [ThiI sulfur-carrier protein]-L-cysteine + a 4-thiouridine in tRNA + 2 oxidized [2Fe-2S]-[ferredoxin] + AMP + diphosphate. It catalyses the reaction [ThiS sulfur-carrier protein]-C-terminal Gly-Gly-AMP + S-sulfanyl-L-cysteinyl-[cysteine desulfurase] + AH2 = [ThiS sulfur-carrier protein]-C-terminal-Gly-aminoethanethioate + L-cysteinyl-[cysteine desulfurase] + A + AMP + 2 H(+). It participates in cofactor biosynthesis; thiamine diphosphate biosynthesis. In terms of biological role, catalyzes the ATP-dependent transfer of a sulfur to tRNA to produce 4-thiouridine in position 8 of tRNAs, which functions as a near-UV photosensor. Also catalyzes the transfer of sulfur to the sulfur carrier protein ThiS, forming ThiS-thiocarboxylate. This is a step in the synthesis of thiazole, in the thiamine biosynthesis pathway. The sulfur is donated as persulfide by IscS. This chain is Probable tRNA sulfurtransferase, found in Streptococcus pyogenes serotype M5 (strain Manfredo).